The primary structure comprises 430 residues: 3-phosphoshikimate 1-carboxyvinyltransferase (430 aa).

Lys33, Ser34, and Arg38 together coordinate 3-phosphoshikimate. Lys33 is a binding site for phosphoenolpyruvate. Residues Gly101 and Arg129 each coordinate phosphoenolpyruvate. Residues Ser172, Ser173, Gln174, Ser201, Glu319, and His346 each contribute to the 3-phosphoshikimate site. Gln174 contacts phosphoenolpyruvate. Glu319 functions as the Proton acceptor in the catalytic mechanism. Arg350, Arg391, and Lys416 together coordinate phosphoenolpyruvate.

It belongs to the EPSP synthase family. As to quaternary structure, monomer.

The protein localises to the cytoplasm. The enzyme catalyses 3-phosphoshikimate + phosphoenolpyruvate = 5-O-(1-carboxyvinyl)-3-phosphoshikimate + phosphate. It functions in the pathway metabolic intermediate biosynthesis; chorismate biosynthesis; chorismate from D-erythrose 4-phosphate and phosphoenolpyruvate: step 6/7. Its function is as follows. Catalyzes the transfer of the enolpyruvyl moiety of phosphoenolpyruvate (PEP) to the 5-hydroxyl of shikimate-3-phosphate (S3P) to produce enolpyruvyl shikimate-3-phosphate and inorganic phosphate. The polypeptide is 3-phosphoshikimate 1-carboxyvinyltransferase (Corynebacterium glutamicum (strain ATCC 13032 / DSM 20300 / JCM 1318 / BCRC 11384 / CCUG 27702 / LMG 3730 / NBRC 12168 / NCIMB 10025 / NRRL B-2784 / 534)).